Here is a 74-residue protein sequence, read N- to C-terminus: Exodeoxyribonuclease 7 small subunit (74 aa).

This sequence belongs to the XseB family. As to quaternary structure, heterooligomer composed of large and small subunits.

The protein resides in the cytoplasm. The enzyme catalyses Exonucleolytic cleavage in either 5'- to 3'- or 3'- to 5'-direction to yield nucleoside 5'-phosphates.. Bidirectionally degrades single-stranded DNA into large acid-insoluble oligonucleotides, which are then degraded further into small acid-soluble oligonucleotides. In Neisseria gonorrhoeae (strain ATCC 700825 / FA 1090), this protein is Exodeoxyribonuclease 7 small subunit.